Consider the following 196-residue polypeptide: Holliday junction branch migration complex subunit RuvA (196 aa).

The tract at residues 1–63 (MISFVSGRVA…EDSLTLYGFA (63 aa)) is domain I. The tract at residues 64 to 136 (DDDERTVFEL…LKDRLGTPST (73 aa)) is domain II. The segment at 136-140 (TAAAE) is flexible linker. The segment at 141 to 196 (STSGWRDAVHAGLLNLGYTARQADEAIAAIAGELDDSAAVDTATALRLALATLKRP) is domain III.

The protein belongs to the RuvA family. In terms of assembly, homotetramer. Forms an RuvA(8)-RuvB(12)-Holliday junction (HJ) complex. HJ DNA is sandwiched between 2 RuvA tetramers; dsDNA enters through RuvA and exits via RuvB. An RuvB hexamer assembles on each DNA strand where it exits the tetramer. Each RuvB hexamer is contacted by two RuvA subunits (via domain III) on 2 adjacent RuvB subunits; this complex drives branch migration. In the full resolvosome a probable DNA-RuvA(4)-RuvB(12)-RuvC(2) complex forms which resolves the HJ.

It localises to the cytoplasm. Its function is as follows. The RuvA-RuvB-RuvC complex processes Holliday junction (HJ) DNA during genetic recombination and DNA repair, while the RuvA-RuvB complex plays an important role in the rescue of blocked DNA replication forks via replication fork reversal (RFR). RuvA specifically binds to HJ cruciform DNA, conferring on it an open structure. The RuvB hexamer acts as an ATP-dependent pump, pulling dsDNA into and through the RuvAB complex. HJ branch migration allows RuvC to scan DNA until it finds its consensus sequence, where it cleaves and resolves the cruciform DNA. This Acidothermus cellulolyticus (strain ATCC 43068 / DSM 8971 / 11B) protein is Holliday junction branch migration complex subunit RuvA.